The sequence spans 481 residues: Cysteine--tRNA ligase (481 aa).

Zn(2+) is bound at residue Cys-29. Residues 31 to 41 carry the 'HIGH' region motif; that stretch reads PTVYDYSHLGH. Positions 210, 235, and 239 each coordinate Zn(2+). The 'KMSKS' region signature appears at 272-276; sequence KMSKS. ATP is bound at residue Lys-275.

This sequence belongs to the class-I aminoacyl-tRNA synthetase family. In terms of assembly, monomer. It depends on Zn(2+) as a cofactor.

Its subcellular location is the cytoplasm. It catalyses the reaction tRNA(Cys) + L-cysteine + ATP = L-cysteinyl-tRNA(Cys) + AMP + diphosphate. The polypeptide is Cysteine--tRNA ligase (Anaeromyxobacter dehalogenans (strain 2CP-1 / ATCC BAA-258)).